Consider the following 406-residue polypeptide: LIM/homeobox protein Lhx1 (406 aa).

LIM zinc-binding domains are found at residues 4–54 (CAGC…CKND) and 63–117 (CAGC…CKED). Disordered stretches follow at residues 128-189 (NSLH…TIKA) and 294-372 (DFFP…SAEV). Low complexity predominate over residues 137-148 (SDPSLSPDSQDP). Basic and acidic residues predominate over residues 151 to 167 (DDAKDSESANVSDKEGG). Residue serine 162 is modified to Phosphoserine. A DNA-binding region (homeobox) is located at residues 180–239 (RRGPRTTIKAKQLETLKAAFAATPKPTRHIREQLAQETGLNMRVIQVWFQNRRSKERRMK). A compositionally biased stretch (low complexity) spans 315-327 (PSSGPSGTPLGGL). Pro residues predominate over residues 352-362 (GDSPSPEPSLP).

Interacts with LDB1 via the tandem LIM domains.

It localises to the nucleus. Its function is as follows. Potential transcription factor. May play a role in early mesoderm formation and later in lateral mesoderm differentiation and neurogenesis. The sequence is that of LIM/homeobox protein Lhx1 (Lhx1) from Mesocricetus auratus (Golden hamster).